Consider the following 60-residue polypeptide: Bowman-Birk type proteinase inhibitor C1 (60 aa).

4 disulfide bridges follow: Cys5/Cys21, Cys11/Cys19, Cys28/Cys35, and Cys32/Cys49.

It belongs to the Bowman-Birk serine protease inhibitor family. In terms of tissue distribution, expressed in bulb (at protein level).

Serine protease inhibitor. Strongly inhibits trypsin (Ki = 0.22 nM) and very weakly inhibits chymotrypsin (Ki = 1200 nM). Does not inhibit bacterial subtilisin. The sequence is that of Bowman-Birk type proteinase inhibitor C1 from Hyacinthus orientalis (Common hyacinth).